A 347-amino-acid polypeptide reads, in one-letter code: Beta-hexosaminidase (347 aa).

Substrate contacts are provided by residues Asp-62, Arg-70, Arg-134, and 164 to 165 (KH). His-177 serves as the catalytic Proton donor/acceptor. Asp-249 serves as the catalytic Nucleophile.

The protein belongs to the glycosyl hydrolase 3 family. NagZ subfamily.

It localises to the cytoplasm. It catalyses the reaction Hydrolysis of terminal non-reducing N-acetyl-D-hexosamine residues in N-acetyl-beta-D-hexosaminides.. Its pathway is cell wall biogenesis; peptidoglycan recycling. Plays a role in peptidoglycan recycling by cleaving the terminal beta-1,4-linked N-acetylglucosamine (GlcNAc) from peptide-linked peptidoglycan fragments, giving rise to free GlcNAc, anhydro-N-acetylmuramic acid and anhydro-N-acetylmuramic acid-linked peptides. In Mannheimia succiniciproducens (strain KCTC 0769BP / MBEL55E), this protein is Beta-hexosaminidase.